A 59-amino-acid polypeptide reads, in one-letter code: Large ribosomal subunit protein uL30 (59 aa).

Belongs to the universal ribosomal protein uL30 family. Part of the 50S ribosomal subunit.

The chain is Large ribosomal subunit protein uL30 from Clostridium botulinum (strain Alaska E43 / Type E3).